Reading from the N-terminus, the 423-residue chain is Gamma-glutamyl phosphate reductase (423 aa).

Belongs to the gamma-glutamyl phosphate reductase family.

The protein localises to the cytoplasm. The enzyme catalyses L-glutamate 5-semialdehyde + phosphate + NADP(+) = L-glutamyl 5-phosphate + NADPH + H(+). The protein operates within amino-acid biosynthesis; L-proline biosynthesis; L-glutamate 5-semialdehyde from L-glutamate: step 2/2. Functionally, catalyzes the NADPH-dependent reduction of L-glutamate 5-phosphate into L-glutamate 5-semialdehyde and phosphate. The product spontaneously undergoes cyclization to form 1-pyrroline-5-carboxylate. This Paramagnetospirillum magneticum (strain ATCC 700264 / AMB-1) (Magnetospirillum magneticum) protein is Gamma-glutamyl phosphate reductase.